The chain runs to 478 residues: Sphingomyelin synthase-related protein 1 (478 aa).

Positions 1–22 (MPAGSRAGSRLRSGSLPRPSRL) are enriched in low complexity. The interval 1–65 (MPAGSRAGSR…TAEEVEKEMA (65 aa)) is disordered. The SAM domain occupies 75–141 (WTTKHVAVWL…MLSVRKLQKI (67 aa)). A run of 6 helical transmembrane segments spans residues 216–236 (ILSC…MVIV), 264–284 (FSMT…VLLL), 295–315 (LCSL…VTSL), 341–361 (AIWS…DYMF), 385–405 (FLHT…LAAH), and 410–430 (IDVF…HTLA). Over 431 to 478 (NTRAYHQSRRARIWFPMFSFFECNVNGTVPNEYCWPFSKPAIMKRLIG) the chain is Cytoplasmic.

This sequence belongs to the sphingomyelin synthase family. In terms of tissue distribution, expressed ubiquitously with highest levels in macrophages and testis.

Its subcellular location is the endoplasmic reticulum membrane. The catalysed reaction is an N-acylsphing-4-enine + a 1,2-diacyl-sn-glycero-3-phosphoethanolamine = an N-acylsphing-4-enine 1-phosphoethanolamine + a 1,2-diacyl-sn-glycerol. It carries out the reaction an N-acylsphinganine + a 1,2-diacyl-sn-glycero-3-phosphoethanolamine = an N-acylsphinganine-1-phosphoethanolamine + a 1,2-diacyl-sn-glycerol. It catalyses the reaction an N-acyl-(4R)-4-hydroxysphinganine + a 1,2-diacyl-sn-glycero-3-phosphoethanolamine = an N-acyl-(4R)-4-hydroxysphinganine-1-phosphoethanolamine + a 1,2-diacyl-sn-glycerol. The enzyme catalyses N-hexadecanoylsphinganine + a 1,2-diacyl-sn-glycero-3-phosphoethanolamine = N-hexadecanoyl-sphinganine-1-phosphoethanolamine + a 1,2-diacyl-sn-glycerol. The catalysed reaction is N-hexadecanoyl-(4R)-hydroxysphinganine + a 1,2-diacyl-sn-glycero-3-phosphoethanolamine = N-hexadecanoyl-(4R)-hydroxysphinganine-1-phosphoethanolamine + a 1,2-diacyl-sn-glycerol. It participates in sphingolipid metabolism. Synthesizes sphingolipids through transfer of a phosphatidyl head group from a glycerophospholipid on to the primary hydroxyl of a ceramide in the lumen of the endoplasmic reticulum. Catalyzes the synthesis of ceramide phosphoethanolamines (CPEs) (such as N-acylsphing-4-enine 1-phosphoethanolamine) by transferring phosphoethanolamine head group, which is smaller and more hydrophilic than the phosphocholine (PC) headgroup transferred in the canonical sphingomyelin synthesis (SMS) reaction by SMS1 or SMS2, from a phosphatidylethanolamine (1,2-diacyl-sn-glycero-3-phosphoethanolamine, PE) to a ceramide (such as N-acylsphing-4-enine). The larger PC prevents an efficient fit in the enzyme's catalytic pocket, leading to little or no SMS activity. In vitro, in the absence of ceramide, it has PLC activity with preference for phosphatidylinositol and phosphatidic acid, but also hydrolyzes phosphatidylethanolamine. The chain is Sphingomyelin synthase-related protein 1 from Mus musculus (Mouse).